The following is a 451-amino-acid chain: Trigger factor (451 aa).

One can recognise a PPIase FKBP-type domain in the interval 163–248 (GDIIDMEYTV…IKALYANILP (86 aa)).

Belongs to the FKBP-type PPIase family. Tig subfamily.

The protein localises to the cytoplasm. The catalysed reaction is [protein]-peptidylproline (omega=180) = [protein]-peptidylproline (omega=0). Involved in protein export. Acts as a chaperone by maintaining the newly synthesized protein in an open conformation. Functions as a peptidyl-prolyl cis-trans isomerase. The protein is Trigger factor of Leptospira interrogans serogroup Icterohaemorrhagiae serovar copenhageni (strain Fiocruz L1-130).